Reading from the N-terminus, the 65-residue chain is Putative beta-neurotoxin RjAa8 (65 aa).

The LCN-type CS-alpha/beta domain maps to 1–64 (KEGYPMGRDG…VWDSSTNKCG (64 aa)). 4 disulfides stabilise this stretch: Cys-11–Cys-63, Cys-15–Cys-37, Cys-22–Cys-44, and Cys-26–Cys-46.

It belongs to the long (4 C-C) scorpion toxin superfamily. Sodium channel inhibitor family. Beta subfamily. As to expression, expressed by the venom gland.

The protein localises to the secreted. Its function is as follows. Beta toxins bind voltage-independently at site-4 of sodium channels (Nav) and shift the voltage of activation toward more negative potentials thereby affecting sodium channel activation and promoting spontaneous and repetitive firing. The protein is Putative beta-neurotoxin RjAa8 of Rhopalurus junceus (Caribbean blue scorpion).